A 425-amino-acid chain; its full sequence is MFIDKARIFVKAGNGGNGSVAFRREKYVPAGGPDGGDGGRGASIIFEVDLGLRTLMDFKYQKKYQAQNGGDGSKGKRAGKNGENLVLKVPAGTVIRDEATGLVLADLKKEGDTAIVAKGGIGGKGNQHFANAVRQAPAFAKSGTDGEERWITLELKMIADVGLLGFPNVGKSTFLSVVTKAKPKIANYHFTTLTPNLGVVQTKFGDSFVLADIPGIIEGASEGIGLGHEFLRHVERTKVLIHIVDISGLEGRDPIEDFDKINDELKLYNEKLSKRPQVVVANKFDILEDESKFEKFKSELEGRGYTVFKMSAATRQGIDEVIAYVSKMLKEVEDVELVSEEEMYRPELDIGTEEELSIDIEDGVYVVTGKALRRIMYSVNFDDMESLQYFQKAMESQGVFDRLREMGIEDGDVVKIYELEFEFYN.

Residues 1–158 (MFIDKARIFV…RWITLELKMI (158 aa)) form the Obg domain. Positions 159 to 330 (ADVGLLGFPN…VIAYVSKMLK (172 aa)) constitute an OBG-type G domain. Residues 165–172 (GFPNVGKS), 190–194 (FTTLT), 212–215 (DIPG), 282–285 (NKFD), and 311–313 (SAA) each bind GTP. The Mg(2+) site is built by S172 and T192. Residues 344–425 (YRPELDIGTE…IYELEFEFYN (82 aa)) form the OCT domain.

It belongs to the TRAFAC class OBG-HflX-like GTPase superfamily. OBG GTPase family. Monomer. It depends on Mg(2+) as a cofactor.

It localises to the cytoplasm. Its function is as follows. An essential GTPase which binds GTP, GDP and possibly (p)ppGpp with moderate affinity, with high nucleotide exchange rates and a fairly low GTP hydrolysis rate. Plays a role in control of the cell cycle, stress response, ribosome biogenesis and in those bacteria that undergo differentiation, in morphogenesis control. This Clostridioides difficile (strain 630) (Peptoclostridium difficile) protein is GTPase Obg.